The following is a 102-amino-acid chain: MGKTGNIEHVEERVESELMPPSMYKVILNNDDYTPMDFVIEVLQVFFRKNEQEATDIMLTIHHQGKGICGIFPFGIAETKVIQVNQFARQNQHPLLCSLEKA.

Belongs to the ClpS family. As to quaternary structure, binds to the N-terminal domain of the chaperone ClpA.

Its function is as follows. Involved in the modulation of the specificity of the ClpAP-mediated ATP-dependent protein degradation. The sequence is that of ATP-dependent Clp protease adapter protein ClpS from Shewanella putrefaciens (strain CN-32 / ATCC BAA-453).